The sequence spans 426 residues: Glutamate-1-semialdehyde 2,1-aminomutase (426 aa).

Residue lysine 265 is modified to N6-(pyridoxal phosphate)lysine.

The protein belongs to the class-III pyridoxal-phosphate-dependent aminotransferase family. HemL subfamily. Pyridoxal 5'-phosphate serves as cofactor.

It localises to the cytoplasm. The catalysed reaction is (S)-4-amino-5-oxopentanoate = 5-aminolevulinate. It participates in porphyrin-containing compound metabolism; protoporphyrin-IX biosynthesis; 5-aminolevulinate from L-glutamyl-tRNA(Glu): step 2/2. The polypeptide is Glutamate-1-semialdehyde 2,1-aminomutase (Hyperthermus butylicus (strain DSM 5456 / JCM 9403 / PLM1-5)).